We begin with the raw amino-acid sequence, 44 residues long: Photosystem I reaction center subunit IX (44 aa).

The chain crosses the membrane as a helical span at residues 7-27 (YLSVAPVLSTLWFGALAGLLI).

This sequence belongs to the PsaJ family.

The protein localises to the plastid. Its subcellular location is the chloroplast thylakoid membrane. Its function is as follows. May help in the organization of the PsaE and PsaF subunits. The sequence is that of Photosystem I reaction center subunit IX from Coffea arabica (Arabian coffee).